A 169-amino-acid chain; its full sequence is Large ribosomal subunit protein uL5 (169 aa).

The protein belongs to the universal ribosomal protein uL5 family. Part of the 50S ribosomal subunit; contacts the 5S rRNA and probably tRNA. Forms a bridge to the 30S subunit in the 70S ribosome.

Functionally, this is one of the proteins that bind and probably mediate the attachment of the 5S RNA into the large ribosomal subunit, where it forms part of the central protuberance. In the 70S ribosome it contacts protein S13 of the 30S subunit (bridge B1b), connecting the 2 subunits; this bridge is implicated in subunit movement. May contact the P site tRNA; the 5S rRNA and some of its associated proteins might help stabilize positioning of ribosome-bound tRNAs. This is Large ribosomal subunit protein uL5 from Nanoarchaeum equitans (strain Kin4-M).